The chain runs to 427 residues: Peptidase B (427 aa).

Mn(2+) is bound by residues lysine 195 and aspartate 200. Residue lysine 207 is part of the active site. Mn(2+)-binding residues include aspartate 218, aspartate 277, and glutamate 279. Arginine 281 is an active-site residue.

It belongs to the peptidase M17 family. In terms of assembly, homohexamer. Mn(2+) serves as cofactor.

It is found in the cytoplasm. It carries out the reaction Release of an N-terminal amino acid, Xaa, from a peptide or arylamide. Xaa is preferably Glu or Asp but may be other amino acids, including Leu, Met, His, Cys and Gln.. Probably plays an important role in intracellular peptide degradation. The polypeptide is Peptidase B (Escherichia coli O139:H28 (strain E24377A / ETEC)).